The primary structure comprises 368 residues: UDP-galactose/UDP-N-acetylglucosamine transporter srf-3 (368 aa).

Helical transmembrane passes span 72-92, 118-138, 145-165, 174-194, 203-223, 235-254, 273-293, and 317-337; these read FVST…CLFL, LKVC…YVAA, TFMI…VIIL, WFAL…GTKA, FVGF…GIYF, LWMR…FSAI, SIVW…AVCI, and IFLF…LVIF.

The protein belongs to the nucleotide-sugar transporter family. SLC35A subfamily. As to expression, expressed exclusively in pharyngeal cells g1 and g2, lateral seam cells, spermatheca and vas deferens.

It localises to the golgi apparatus membrane. In terms of biological role, acts as a transporter of both UDP-galactose and UDP-N-acetylglucosamine into the Golgi lumen. Apparently transports UDP-galactose and UDP-N-acetylglucosamine simultaneously, and independently, by an unknown mechanism. Functions redundantly with nucleotide sugar transporter nstp-4. May be involved in gonadal development. The polypeptide is UDP-galactose/UDP-N-acetylglucosamine transporter srf-3 (srf-3) (Caenorhabditis elegans).